The following is a 299-amino-acid chain: MSSSKPLIIVLLGPTASGKTALGIEIAEHLGLEIHNVDSRQVYMDMDIGTAKPSQEQQKRIRHFLIDLKPPNEKMTMHDFHKTARVSLDNALNKTNVGLLVGGSGLYLKALTSGLCPPSIPPESSFRKQLHDIGQEQCYQLLQSCDPLSAKTIAPSDSVRTTRALEVFYATGQSKTSLQSSKPPPWRLLELGLNPSNLNDRIAQRTENIFQNGLIEETEHLIGKFGKELPLLNTIGYAEASQMIDGKLPLNDAIFQTNKRTKQFAKRQKTWFRGQHNPKWLNEKNPLSEALSLIHNVIR.

13–20 (GPTASGKT) serves as a coordination point for ATP. Position 15–20 (15–20 (TASGKT)) interacts with substrate. The interaction with substrate tRNA stretch occupies residues 38–41 (DSRQ).

The protein belongs to the IPP transferase family. Monomer. The cofactor is Mg(2+).

It catalyses the reaction adenosine(37) in tRNA + dimethylallyl diphosphate = N(6)-dimethylallyladenosine(37) in tRNA + diphosphate. Its function is as follows. Catalyzes the transfer of a dimethylallyl group onto the adenine at position 37 in tRNAs that read codons beginning with uridine, leading to the formation of N6-(dimethylallyl)adenosine (i(6)A). In Prochlorococcus marinus (strain MIT 9211), this protein is tRNA dimethylallyltransferase.